We begin with the raw amino-acid sequence, 192 residues long: Orotate phosphoribosyltransferase (192 aa).

5-phospho-alpha-D-ribose 1-diphosphate-binding positions include arginine 102, lysine 103, lysine 106, and 129–137; that span reads EDVVTTGRS. The orotate site is built by threonine 133 and arginine 161.

It belongs to the purine/pyrimidine phosphoribosyltransferase family. PyrE subfamily. As to quaternary structure, homodimer. Requires Mg(2+) as cofactor.

It catalyses the reaction orotidine 5'-phosphate + diphosphate = orotate + 5-phospho-alpha-D-ribose 1-diphosphate. It functions in the pathway pyrimidine metabolism; UMP biosynthesis via de novo pathway; UMP from orotate: step 1/2. Catalyzes the transfer of a ribosyl phosphate group from 5-phosphoribose 1-diphosphate to orotate, leading to the formation of orotidine monophosphate (OMP). The chain is Orotate phosphoribosyltransferase from Prochlorococcus marinus (strain SARG / CCMP1375 / SS120).